Here is a 232-residue protein sequence, read N- to C-terminus: Golgi SNAP receptor complex member 1 (232 aa).

Over 1–211 (MGGSSYDVLR…QRINIKKRRD (211 aa)) the chain is Cytoplasmic. Coiled-coil stretches lie at residues 6–23 (YDVL…IDLK) and 52–80 (GEHV…MSDL). The helical; Anchor for type IV membrane protein transmembrane segment at 212–232 (SLILGAVIGFCVILLLLYAFN) threads the bilayer.

This sequence belongs to the GOSR1 family. Component of several multiprotein Golgi SNARE complexes.

The protein localises to the golgi apparatus membrane. In terms of biological role, involved in transport from the ER to the Golgi apparatus as well as in intra-Golgi transport. It belongs to a super-family of proteins called t-SNAREs or soluble NSF (N-ethylmaleimide-sensitive factor) attachment protein receptor. The sequence is that of Golgi SNAP receptor complex member 1 (Gos28) from Drosophila melanogaster (Fruit fly).